The following is a 932-amino-acid chain: Potassium voltage-gated channel subfamily KQT member 5 (932 aa).

At 1–125 (MPRHHAGGEE…YNVLERPRGW (125 aa)) the chain is on the cytoplasmic side. Phosphoserine is present on S88. Residues 126–146 (AFIYHAFVFLLVFGCLILSVF) form a helical membrane-spanning segment. At 147-156 (STIPEHTKLA) the chain is on the extracellular side. The helical transmembrane segment at 157 to 177 (SSCLLILEFVMIVVFGLEFII) threads the bilayer. Over 178–200 (RIWSAGCCCRYRGWQGRLRFARK) the chain is Cytoplasmic. The chain crosses the membrane as a helical span at residues 201-221 (PFCVIDTIVLIASIAVVSAKT). Residues 222–229 (QGNIFATS) lie on the Extracellular side of the membrane. The helical; Voltage-sensor transmembrane segment at 230–252 (ALRSLRFLQILRMVRMDRRGGTW) threads the bilayer. Residues R248 and K264 each coordinate a 1,2-diacyl-sn-glycero-3-phospho-(1D-myo-inositol-4,5-bisphosphate). Over 253-266 (KLLGSVVYAHSKEL) the chain is Cytoplasmic. The chain crosses the membrane as a helical span at residues 267 to 287 (ITAWYIGFLVLIFSSFLVYLV). Residues 288–298 (EKDANKEFSTY) lie on the Extracellular side of the membrane. An intramembrane region (pore-forming) is located at residues 299 to 319 (ADALWWGTITLTTIGYGDKTP). Topologically, residues 320 to 325 (LTWLGR) are extracellular. A helical transmembrane segment spans residues 326-346 (LLSAGFALLGISFFALPAGIL). Over 347–932 (GSGFALKVQE…ALSLPHVKLK (586 aa)) the chain is Cytoplasmic. K361 contributes to the a 1,2-diacyl-sn-glycero-3-phospho-(1D-myo-inositol-4,5-bisphosphate) binding site. An interaction with CALM region spans residues 370–378 (AANLIQCVW). The disordered stretch occupies residues 404 to 465 (SPTKKEQGEA…GSPTKVQKSW (62 aa)). Residues 431–440 (RGQSIKSRQA) show a composition bias toward polar residues. Position 447 is a phosphoserine (S447). The interval 521-528 (VIRAIRIM) is interaction with CALM. The disordered stretch occupies residues 655–678 (SDYQSPVDSKDLSGSAQNSGCLSR). S831 bears the Phosphoserine mark. Positions 876–885 (VGPEETETDT) are enriched in acidic residues. The tract at residues 876–919 (VGPEETETDTFDAAPQPAREAAFASDSLRTGRSRSSQSICKAGE) is disordered. Positions 888-899 (AAPQPAREAAFA) are enriched in low complexity. The span at 902–914 (SLRTGRSRSSQSI) shows a compositional bias: polar residues.

The protein belongs to the potassium channel family. KQT (TC 1.A.1.15) subfamily. Kv7.5/KCNQ5 sub-subfamily. Homotetramer; forms a functional homotetrameric channel resulting in the expression of a small M-current. Heterotetramer with KCNQ3; forms heterotetrameric M-channel responsible for the native M-current. Heterotetramer with KCNQ1; forms a functional voltage-gated potassium channel. Interacts (via C-terminus) with calmodulin/CALM1; forms a heterooctameric structure (with 4:4 KCNQ1:CALM stoichiometry); the interaction is calcium-independent, constitutive and participates in the channel function. As to expression, strongly expressed in brain and skeletal muscle. In brain, expressed in cerebral cortex, occipital pole, frontal lobe and temporal lobe. Lower levels in hippocampus and putamen. Low to undetectable levels in medulla, cerebellum and thalamus.

Its subcellular location is the cell membrane. The catalysed reaction is K(+)(in) = K(+)(out). With respect to regulation, phosphatidylinositol-4,5-bisphosphate (PIP2) is essential to activate KCNQ5 channel by inducing the coupling of the voltage-sensing domain (VSD) and the pore-forming domain (PD). Calcium suppresses KCNQ5 channel current through calcium-bound CALM C-terminus. Therefore CALM acts as calcium sensor that controls channel activity. Activated by niflumic acid and the anticonvulsant retigabine. Inhibited by barium, linopirdine, XE991 and tetraethylammonium (as homomer). Insensitive to tetraethylammonium in KCNQ3-KCNQ5 heteromers. Its function is as follows. Pore-forming subunit of the voltage-gated potassium (Kv) channel broadly expressed in brain and involved in the regulation of neuronal excitability. Associates with KCNQ3/Kv7.3 pore-forming subunit to form a potassium channel which contributes to M-type current, a slowly activating and deactivating potassium conductance which plays a critical role in determining the subthreshold electrical excitability of neurons. Contributes, with other potassium channels, to the molecular diversity of a heterogeneous population of M-channels, varying in kinetic and pharmacological properties, which underlie this physiologically important current. Also forms a functional channel with KCNQ1/Kv7.1 subunit that may contribute to vasoconstriction and hypertension. Channel may be selectively permeable in vitro to other cations besides potassium, in decreasing order of affinity K(+) = Rb(+) &gt; Cs(+) &gt; Na(+). Similar to the native M-channel, KCNQ3-KCNQ5 potassium channel is suppressed by activation of the muscarinic acetylcholine receptor CHRM1. The polypeptide is Potassium voltage-gated channel subfamily KQT member 5 (Homo sapiens (Human)).